Reading from the N-terminus, the 489-residue chain is GDP-fucose protein O-fucosyltransferase 4 (489 aa).

The Cytoplasmic segment spans residues 1-7; the sequence is MAARCTE. Residues 8–24 form a helical; Signal-anchor for type II membrane protein membrane-spanning segment; the sequence is AVLAALGVLSVCSASSS. At 25 to 489 the chain is on the lumenal side; the sequence is GSEASGEAER…EIFMKRNKNL (465 aa). N-linked (GlcNAc...) asparagine glycosylation occurs at Asn162. A disulfide bond links Cys385 and Cys388.

The protein belongs to the glycosyltransferase 10 family. In terms of tissue distribution, widely expressed. Expressed at slightly higher level in heart, kidney and lung.

It is found in the endoplasmic reticulum membrane. The catalysed reaction is L-threonyl-[protein] + GDP-beta-L-fucose = 3-O-(alpha-L-fucosyl)-L-threonyl-[protein] + GDP + H(+). The enzyme catalyses L-seryl-[protein] + GDP-beta-L-fucose = 3-O-(alpha-L-fucosyl)-L-seryl-[protein] + GDP + H(+). It functions in the pathway protein modification; protein glycosylation. Its function is as follows. Protein O-fucosyltransferase that specifically catalyzes O-fucosylation of serine or threonine residues in EMI domains of target proteins, such as MMRN1, MMRN2 and EMID1. Attaches fucose through an O-glycosidic linkage. O-fucosylation of EMI domain-containing proteins may be required for facilitating protein folding and secretion. Also shows minor alpha-(1,3)-fucosyltransferase activity toward activity toward biantennary N-glycan acceptors. However, this was tested with a library of synthetic substrates and this activity is unsure in vivo. The sequence is that of GDP-fucose protein O-fucosyltransferase 4 (Fut11) from Mus musculus (Mouse).